A 521-amino-acid polypeptide reads, in one-letter code: Probable protein kinase UbiB (521 aa).

The 379-residue stretch at 119–497 (QFDETPIASA…QKRTNRLLQT (379 aa)) folds into the Protein kinase domain. ATP-binding positions include 125–133 (IASASIAQV) and K151. D286 serves as the catalytic Proton acceptor. The chain crosses the membrane as a helical span at residues 496-516 (QTIIYGGIGFVLGLLAMQLLV).

This sequence belongs to the ABC1 family. UbiB subfamily.

It is found in the cell inner membrane. Its pathway is cofactor biosynthesis; ubiquinone biosynthesis [regulation]. Its function is as follows. Is probably a protein kinase regulator of UbiI activity which is involved in aerobic coenzyme Q (ubiquinone) biosynthesis. This is Probable protein kinase UbiB from Variovorax paradoxus (strain S110).